We begin with the raw amino-acid sequence, 507 residues long: 3-octaprenyl-4-hydroxybenzoate carboxy-lyase (507 aa).

Residue Asn-177 coordinates Mn(2+). Prenylated FMN is bound by residues Ile-180–Arg-182, Arg-194–Leu-196, and Arg-199–Gly-200. Glu-243 provides a ligand contact to Mn(2+). The active-site Proton donor is Asp-302.

This sequence belongs to the UbiD family. As to quaternary structure, homohexamer. The cofactor is prenylated FMN. Mn(2+) is required as a cofactor.

It localises to the cell membrane. It carries out the reaction a 4-hydroxy-3-(all-trans-polyprenyl)benzoate + H(+) = a 2-(all-trans-polyprenyl)phenol + CO2. The protein operates within cofactor biosynthesis; ubiquinone biosynthesis. Catalyzes the decarboxylation of 3-octaprenyl-4-hydroxy benzoate to 2-octaprenylphenol, an intermediate step in ubiquinone biosynthesis. The protein is 3-octaprenyl-4-hydroxybenzoate carboxy-lyase of Cupriavidus metallidurans (strain ATCC 43123 / DSM 2839 / NBRC 102507 / CH34) (Ralstonia metallidurans).